The following is a 776-amino-acid chain: MKQNFDDRKIVKQYREIARQIVKKEGLYKNMDQDELREQTNYWREKFKTKEMSERDKINIFALAREAASRIIGLDAVVVQLIGALVLGDGKVAEMKTGEGKTLMSLFVMFIEVMRGNRVHLVTANEYLARRDREEIGQVLEYLGISVALNESDLDKDQKKAIYTADVIYGTASEFGFDYLRDNMVRQKEDKVQSGLDFVLIDEADSILIDEARTPLLISDRKEEDLSLYQTANKLVKTMLKDEYEIEEHKRFVWLNDAGIEKAQKFWGVESLYSAEGQAELRITMLLMRAHFLMHKDKDYVVLDDEVLIIDPHTGRALPGRRFNDGLHQAIEAKEEVEVKEESRTLATITIQNYFRMYKKISGMTGTAKTEEEEFRQIYNMDVVVIPTNLRINREDVPDDIFYTKKEKGRAIVYEVSWRYEKGQPTLIGTSSIKSNEWISGLLDAAGIPHQVLNAKNHAQEAEIIAKAGKRGMVTLATNMAGRGTDIKLDPDVHKLGGLAVIGTERHESRRIDLQLMGRSGRRGDPGFSKFMISLEDDLLEQFESKSWEKLSVKLKRKAPRDGKPVNSSKIHAVVVNAQKRLEGANYDIRKDLLSYDEVIDLQRKMVYKERDLLLERNKLGVSSEKILREVAEYAFIHPVDIEQEKLEKYYARQKELLGGTKFPVSFDEVSLMEPAEVVEKIVTWHKKERDKFPIETITAIEKEVYLNLMDQMWVMHLDAMVQLREGIHLRAYGQQDPLVMYQKEGAQLFEKFQADYHFYFAHALLELDPDGLVQG.

ATP-binding positions include glutamine 80, 98 to 102 (GEGKT), and aspartate 486.

This sequence belongs to the SecA family. As to quaternary structure, monomer and homodimer. Part of the essential Sec protein translocation apparatus which comprises SecA, SecYEG and auxiliary proteins SecDF. Other proteins may also be involved.

The protein localises to the cell membrane. It is found in the cytoplasm. The catalysed reaction is ATP + H2O + cellular proteinSide 1 = ADP + phosphate + cellular proteinSide 2.. In terms of biological role, part of the Sec protein translocase complex. Interacts with the SecYEG preprotein conducting channel. Has a central role in coupling the hydrolysis of ATP to the transfer of proteins into and across the cell membrane, serving as an ATP-driven molecular motor driving the stepwise translocation of polypeptide chains across the membrane. The protein is Protein translocase subunit SecA 2 of Listeria welshimeri serovar 6b (strain ATCC 35897 / DSM 20650 / CCUG 15529 / CIP 8149 / NCTC 11857 / SLCC 5334 / V8).